A 130-amino-acid polypeptide reads, in one-letter code: Small ribosomal subunit protein uS9 (130 aa).

The protein belongs to the universal ribosomal protein uS9 family.

The sequence is that of Small ribosomal subunit protein uS9 from Streptococcus suis (strain 98HAH33).